We begin with the raw amino-acid sequence, 286 residues long: Polyamine aminopropyltransferase (286 aa).

The PABS domain occupies 5 to 238 (TMWHETLHDQ…GIMTFAWATD (234 aa)). Gln-33 contacts S-methyl-5'-thioadenosine. 2 residues coordinate spermidine: His-64 and Asp-88. Residues Glu-108 and 140 to 141 (DG) contribute to the S-methyl-5'-thioadenosine site. Asp-158 serves as the catalytic Proton acceptor. 158–161 (DCTD) lines the spermidine pocket. Residue Pro-165 coordinates S-methyl-5'-thioadenosine.

It belongs to the spermidine/spermine synthase family. As to quaternary structure, homodimer or homotetramer.

The protein localises to the cytoplasm. It carries out the reaction S-adenosyl 3-(methylsulfanyl)propylamine + putrescine = S-methyl-5'-thioadenosine + spermidine + H(+). The protein operates within amine and polyamine biosynthesis; spermidine biosynthesis; spermidine from putrescine: step 1/1. Catalyzes the irreversible transfer of a propylamine group from the amino donor S-adenosylmethioninamine (decarboxy-AdoMet) to putrescine (1,4-diaminobutane) to yield spermidine. This chain is Polyamine aminopropyltransferase, found in Salmonella enteritidis PT4 (strain P125109).